The chain runs to 88 residues: Small ribosomal subunit protein uS15 (88 aa).

Belongs to the universal ribosomal protein uS15 family. As to quaternary structure, part of the 30S ribosomal subunit. Forms a bridge to the 50S subunit in the 70S ribosome, contacting the 23S rRNA.

Functionally, one of the primary rRNA binding proteins, it binds directly to 16S rRNA where it helps nucleate assembly of the platform of the 30S subunit by binding and bridging several RNA helices of the 16S rRNA. In terms of biological role, forms an intersubunit bridge (bridge B4) with the 23S rRNA of the 50S subunit in the ribosome. This is Small ribosomal subunit protein uS15 from Mycoplasma mobile (strain ATCC 43663 / 163K / NCTC 11711) (Mesomycoplasma mobile).